Reading from the N-terminus, the 337-residue chain is Ketol-acid reductoisomerase (NADP(+)) (337 aa).

In terms of domain architecture, KARI N-terminal Rossmann spans 3-183 (VEMFYDDDAD…GGTRAGVIKT (181 aa)). Residues 26–29 (YGSQ), K49, S52, S54, and 84–87 (DTAQ) contribute to the NADP(+) site. Residue H109 is part of the active site. An NADP(+)-binding site is contributed by G135. Residues 184-329 (TFKEETETDL…KKLRDLMSWV (146 aa)) enclose the KARI C-terminal knotted domain. Positions 192, 196, 228, and 232 each coordinate Mg(2+). S253 serves as a coordination point for substrate.

This sequence belongs to the ketol-acid reductoisomerase family. Mg(2+) is required as a cofactor.

It carries out the reaction (2R)-2,3-dihydroxy-3-methylbutanoate + NADP(+) = (2S)-2-acetolactate + NADPH + H(+). The enzyme catalyses (2R,3R)-2,3-dihydroxy-3-methylpentanoate + NADP(+) = (S)-2-ethyl-2-hydroxy-3-oxobutanoate + NADPH + H(+). It participates in amino-acid biosynthesis; L-isoleucine biosynthesis; L-isoleucine from 2-oxobutanoate: step 2/4. The protein operates within amino-acid biosynthesis; L-valine biosynthesis; L-valine from pyruvate: step 2/4. Involved in the biosynthesis of branched-chain amino acids (BCAA). Catalyzes an alkyl-migration followed by a ketol-acid reduction of (S)-2-acetolactate (S2AL) to yield (R)-2,3-dihydroxy-isovalerate. In the isomerase reaction, S2AL is rearranged via a Mg-dependent methyl migration to produce 3-hydroxy-3-methyl-2-ketobutyrate (HMKB). In the reductase reaction, this 2-ketoacid undergoes a metal-dependent reduction by NADPH to yield (R)-2,3-dihydroxy-isovalerate. The polypeptide is Ketol-acid reductoisomerase (NADP(+)) (Rhodococcus erythropolis (strain PR4 / NBRC 100887)).